The primary structure comprises 200 residues: GTP cyclohydrolase 1 (200 aa).

Zn(2+)-binding residues include Cys-87, His-90, and Cys-158.

It belongs to the GTP cyclohydrolase I family. Toroid-shaped homodecamer, composed of two pentamers of five dimers.

The enzyme catalyses GTP + H2O = 7,8-dihydroneopterin 3'-triphosphate + formate + H(+). Its pathway is cofactor biosynthesis; 7,8-dihydroneopterin triphosphate biosynthesis; 7,8-dihydroneopterin triphosphate from GTP: step 1/1. This chain is GTP cyclohydrolase 1, found in Xanthomonas campestris pv. campestris (strain ATCC 33913 / DSM 3586 / NCPPB 528 / LMG 568 / P 25).